Reading from the N-terminus, the 652-residue chain is MRFSLAWKLLFLILTCKIETQVKCLKFDFPGFNVSNELELIRDNSYIVFGAIQVTPDVTGGPGGTIANQAGRALYKKPFRLWSKHKSATFNTTFVINISNKTDPGGEGLAFVLTPEETAPQNSSGMWLGMVNERTNRNNESRIVSVEFDTRKSHSDDLDGNHVALNVNNINSVVQESLSGRGIKIDSGLDLTAHVRYDGKNLSVYVSRNLDVFEQRNLVFSRAIDLSAYLPETVYVGFTASTSNFTELNCVRSWSFEGLKIDGDGNMLWLWITIPIVFIVGIGAFLGALYLRSRSKAGETNPDIEAELDNCAANPQKFKLRELKRATGNFGAENKLGQGGFGMVFKGKWQGRDIAVKRVSEKSHQGKQEFIAEITTIGNLNHRNLVKLLGWCYERKEYLLVYEYMPNGSLDKYLFLEDKSRSNLTWETRKNIITGLSQALEYLHNGCEKRILHRDIKASNVMLDSDFNAKLGDFGLARMIQQSEMTHHSTKEIAGTPGYMAPETFLNGRATVETDVYAFGVLMLEVVSGKKPSYVLVKDNQNNYNNSIVNWLWELYRNGTITDAADPGMGNLFDKEEMKSVLLLGLACCHPNPNQRPSMKTVLKVLTGETSPPDVPTERPAFVWPAMPPSFSDIDYSLTGSQINSLTELTGR.

Residues 1–20 (MRFSLAWKLLFLILTCKIET) form the signal peptide. Residues 21–266 (QVKCLKFDFP…EGLKIDGDGN (246 aa)) lie on the Extracellular side of the membrane. The legume-lectin like stretch occupies residues 24–257 (CLKFDFPGFN…LNCVRSWSFE (234 aa)). Residues asparagine 33, asparagine 91, asparagine 97, asparagine 100, asparagine 122, asparagine 139, asparagine 201, and asparagine 244 are each glycosylated (N-linked (GlcNAc...) asparagine). The chain crosses the membrane as a helical span at residues 267-287 (MLWLWITIPIVFIVGIGAFLG). The Cytoplasmic segment spans residues 288–652 (ALYLRSRSKA…INSLTELTGR (365 aa)). Residues 330–622 (FGAENKLGQG…PDVPTERPAF (293 aa)) form the Protein kinase domain. ATP contacts are provided by residues 336 to 344 (LGQGGFGMV) and lysine 357. The active-site Proton acceptor is aspartate 455.

The protein in the C-terminal section; belongs to the protein kinase superfamily. Ser/Thr protein kinase family. It in the N-terminal section; belongs to the leguminous lectin family.

The protein resides in the cell membrane. The enzyme catalyses L-seryl-[protein] + ATP = O-phospho-L-seryl-[protein] + ADP + H(+). It carries out the reaction L-threonyl-[protein] + ATP = O-phospho-L-threonyl-[protein] + ADP + H(+). This chain is Probable L-type lectin-domain containing receptor kinase S.5 (LECRKS5), found in Arabidopsis thaliana (Mouse-ear cress).